Here is a 363-residue protein sequence, read N- to C-terminus: DNA replication and repair protein RecF (363 aa).

An ATP-binding site is contributed by 33-40 (GDNGQGKT).

This sequence belongs to the RecF family.

It localises to the cytoplasm. In terms of biological role, the RecF protein is involved in DNA metabolism; it is required for DNA replication and normal SOS inducibility. RecF binds preferentially to single-stranded, linear DNA. It also seems to bind ATP. This Tropheryma whipplei (strain TW08/27) (Whipple's bacillus) protein is DNA replication and repair protein RecF.